The following is a 133-amino-acid chain: Large ribosomal subunit protein uL15 (133 aa).

The tract at residues 1–64 (MGLENLKPAK…QPLQRRLPKI (64 aa)) is disordered.

Belongs to the universal ribosomal protein uL15 family. Part of the 50S ribosomal subunit.

Functionally, binds to the 23S rRNA. In Helicobacter pylori (strain J99 / ATCC 700824) (Campylobacter pylori J99), this protein is Large ribosomal subunit protein uL15.